Here is a 195-residue protein sequence, read N- to C-terminus: Probable peroxygenase 4 (195 aa).

The region spanning 14-49 (EEDNFLQRHVAFFDRNKDGIVYPSETFQGFRAIGCG) is the EF-hand domain. A heme-binding site is contributed by histidine 22. The Ca(2+) site is built by aspartate 27, asparagine 29, aspartate 31, and glutamate 38. The Proline-knot signature appears at 70-79 (PGKGFSIWFP). Residue serine 177 is modified to Phosphoserine.

The protein belongs to the caleosin family. Homodimer. It depends on heme b as a cofactor. Requires Ca(2+) as cofactor. Expressed in roots, leaves, stems, shoots, flowers and germinated seeds. Barely detected in dry seeds prior to germination. Preferentially expressed in vascular bundles and in guard cells.

It is found in the lipid droplet. It carries out the reaction RH + ROOH = ROH + ROH.. Functionally, calcium-binding peroxygenase involved in the degradation of storage lipid in oil bodies. May be involved in the interaction between oil bodies and vacuoles during seed germination. Acts as a negative regulator of abscisic acid responses in non-seed tissues. The sequence is that of Probable peroxygenase 4 (PXG4) from Arabidopsis thaliana (Mouse-ear cress).